The primary structure comprises 314 residues: Malate dehydrogenase (314 aa).

NAD(+) contacts are provided by residues 11 to 16 (GSGNIG) and Asp35. Substrate is bound by residues Arg84 and Arg90. Residues Asn97 and 120-122 (ITN) contribute to the NAD(+) site. The substrate site is built by Asn122 and Arg153. The Proton acceptor role is filled by His177.

The protein belongs to the LDH/MDH superfamily. MDH type 3 family.

It catalyses the reaction (S)-malate + NAD(+) = oxaloacetate + NADH + H(+). Functionally, catalyzes the reversible oxidation of malate to oxaloacetate. The sequence is that of Malate dehydrogenase from Rickettsia prowazekii (strain Madrid E).